We begin with the raw amino-acid sequence, 157 residues long: Transmembrane protein 42 (157 aa).

4 helical membrane passes run 37–57 (FWGVFNCLCAGAFGALAAAAA), 67–87 (IGLCVLGIVAMASANSLMWTF), 100–120 (IASVTVTFSNILCSAILGYLL), and 124–144 (CQEILWWGGVFLILCGLTLIH).

It localises to the membrane. The polypeptide is Transmembrane protein 42 (Tmem42) (Mus musculus (Mouse)).